A 268-amino-acid chain; its full sequence is Ribosomal RNA small subunit methyltransferase A (268 aa).

Residues Asn18, Leu20, Gly45, Glu66, Asp91, and Asn112 each coordinate S-adenosyl-L-methionine.

The protein belongs to the class I-like SAM-binding methyltransferase superfamily. rRNA adenine N(6)-methyltransferase family. RsmA subfamily.

The protein localises to the cytoplasm. It catalyses the reaction adenosine(1518)/adenosine(1519) in 16S rRNA + 4 S-adenosyl-L-methionine = N(6)-dimethyladenosine(1518)/N(6)-dimethyladenosine(1519) in 16S rRNA + 4 S-adenosyl-L-homocysteine + 4 H(+). Specifically dimethylates two adjacent adenosines (A1518 and A1519) in the loop of a conserved hairpin near the 3'-end of 16S rRNA in the 30S particle. May play a critical role in biogenesis of 30S subunits. The sequence is that of Ribosomal RNA small subunit methyltransferase A from Pseudoalteromonas translucida (strain TAC 125).